The primary structure comprises 403 residues: Phosphopentomutase (403 aa).

The Mn(2+) site is built by Asp13, Asp298, His303, Asp339, His340, and His351.

It belongs to the phosphopentomutase family. Requires Mn(2+) as cofactor.

The protein resides in the cytoplasm. The enzyme catalyses 2-deoxy-alpha-D-ribose 1-phosphate = 2-deoxy-D-ribose 5-phosphate. The catalysed reaction is alpha-D-ribose 1-phosphate = D-ribose 5-phosphate. It functions in the pathway carbohydrate degradation; 2-deoxy-D-ribose 1-phosphate degradation; D-glyceraldehyde 3-phosphate and acetaldehyde from 2-deoxy-alpha-D-ribose 1-phosphate: step 1/2. Its function is as follows. Isomerase that catalyzes the conversion of deoxy-ribose 1-phosphate (dRib-1-P) and ribose 1-phosphate (Rib-1-P) to deoxy-ribose 5-phosphate (dRib-5-P) and ribose 5-phosphate (Rib-5-P), respectively. The chain is Phosphopentomutase from Streptococcus pyogenes serotype M18 (strain MGAS8232).